The sequence spans 163 residues: Carbon monoxide dehydrogenase small chain (163 aa).

In terms of domain architecture, 2Fe-2S ferredoxin-type spans 4-80 (KIITVNVNGK…GSEVLTVEGL (77 aa)). [2Fe-2S] cluster contacts are provided by C42, C47, C50, C62, C101, C104, C136, and C138.

In terms of assembly, dimer of heterotrimers. Each heterotrimer consists of a large, a medium and a small subunit. It depends on [2Fe-2S] cluster as a cofactor.

The enzyme catalyses CO + a quinone + H2O = a quinol + CO2. Functionally, catalyzes the oxidation of carbon monoxide to carbon dioxide. In Hydrogenophaga pseudoflava (Pseudomonas carboxydoflava), this protein is Carbon monoxide dehydrogenase small chain (cutS).